Here is a 429-residue protein sequence, read N- to C-terminus: 4-hydroxy-3-methylbut-2-en-1-yl diphosphate synthase (flavodoxin) (429 aa).

4 residues coordinate [4Fe-4S] cluster: cysteine 310, cysteine 313, cysteine 356, and glutamate 363.

The protein belongs to the IspG family. [4Fe-4S] cluster serves as cofactor.

The enzyme catalyses (2E)-4-hydroxy-3-methylbut-2-enyl diphosphate + oxidized [flavodoxin] + H2O + 2 H(+) = 2-C-methyl-D-erythritol 2,4-cyclic diphosphate + reduced [flavodoxin]. The protein operates within isoprenoid biosynthesis; isopentenyl diphosphate biosynthesis via DXP pathway; isopentenyl diphosphate from 1-deoxy-D-xylulose 5-phosphate: step 5/6. Converts 2C-methyl-D-erythritol 2,4-cyclodiphosphate (ME-2,4cPP) into 1-hydroxy-2-methyl-2-(E)-butenyl 4-diphosphate. The chain is 4-hydroxy-3-methylbut-2-en-1-yl diphosphate synthase (flavodoxin) from Bradyrhizobium sp. (strain BTAi1 / ATCC BAA-1182).